A 282-amino-acid chain; its full sequence is Acetyl-coenzyme A carboxylase carboxyl transferase subunit beta (282 aa).

A CoA carboxyltransferase N-terminal domain is found at 29–282 (LMQRCPNCGL…LLKYGGMQDD (254 aa)). Residues cysteine 33, cysteine 36, cysteine 51, and cysteine 54 each contribute to the Zn(2+) site. The C4-type zinc finger occupies 33-54 (CPNCGLEFFARRLDKYKTCPDC).

Belongs to the AccD/PCCB family. As to quaternary structure, acetyl-CoA carboxylase is a heterohexamer composed of biotin carboxyl carrier protein (AccB), biotin carboxylase (AccC) and two subunits each of ACCase subunit alpha (AccA) and ACCase subunit beta (AccD). It depends on Zn(2+) as a cofactor.

The protein resides in the cytoplasm. The catalysed reaction is N(6)-carboxybiotinyl-L-lysyl-[protein] + acetyl-CoA = N(6)-biotinyl-L-lysyl-[protein] + malonyl-CoA. It participates in lipid metabolism; malonyl-CoA biosynthesis; malonyl-CoA from acetyl-CoA: step 1/1. Its function is as follows. Component of the acetyl coenzyme A carboxylase (ACC) complex. Biotin carboxylase (BC) catalyzes the carboxylation of biotin on its carrier protein (BCCP) and then the CO(2) group is transferred by the transcarboxylase to acetyl-CoA to form malonyl-CoA. The sequence is that of Acetyl-coenzyme A carboxylase carboxyl transferase subunit beta from Lactobacillus delbrueckii subsp. bulgaricus (strain ATCC BAA-365 / Lb-18).